A 1188-amino-acid chain; its full sequence is AT-rich interactive domain-containing protein 5B (1188 aa).

Lys-130 is covalently cross-linked (Glycyl lysine isopeptide (Lys-Gly) (interchain with G-Cter in SUMO2)). A disordered region spans residues 251 to 277 (RPRKKKPCPQRRDSFSGVKDSNNNSDG). A Phosphoserine modification is found at Ser-264. Residues 318 to 410 (RADEQAFLVA…LILPYERFIK (93 aa)) enclose the ARID domain. Residue Lys-336 is modified to N6,N6-dimethyllysine. The tract at residues 412–611 (EEDKPLPPIK…QPPLANQNET (200 aa)) is disordered. Lys-445 participates in a covalent cross-link: Glycyl lysine isopeptide (Lys-Gly) (interchain with G-Cter in SUMO2). Residues 446-458 (HEIPKSKKEKENA) show a composition bias toward basic and acidic residues. Residues Lys-494 and Lys-496 each participate in a glycyl lysine isopeptide (Lys-Gly) (interchain with G-Cter in SUMO2) cross-link. Residues 597–609 (SFPTTQPPLANQN) show a composition bias toward polar residues. Residues Lys-767, Lys-774, Lys-803, and Lys-810 each participate in a glycyl lysine isopeptide (Lys-Gly) (interchain with G-Cter in SUMO2) cross-link. Disordered regions lie at residues 846-874 (HHLHNEQTSKYPSRDMYRESENSSFPSHR) and 891-918 (DKKSAAAEAPTDDQPTDLSLPKNPHKPT). Basic and acidic residues predominate over residues 847-866 (HLHNEQTSKYPSRDMYRESE). Residues Lys-893, Lys-916, Lys-920, and Lys-935 each participate in a glycyl lysine isopeptide (Lys-Gly) (interchain with G-Cter in SUMO2) cross-link. Residues 956–978 (RVSPMTMSGPKKYPESLSRSGKP) form a disordered region. Residues Lys-988, Lys-1000, and Lys-1013 each participate in a glycyl lysine isopeptide (Lys-Gly) (interchain with G-Cter in SUMO2) cross-link. The tract at residues 1028–1070 (ARAVSPLDPSKEVSGKEKASEQESEGSKAAHGGHSGGGSEGHK) is disordered. Position 1032 is a phosphoserine (Ser-1032). The span at 1036–1055 (PSKEVSGKEKASEQESEGSK) shows a compositional bias: basic and acidic residues. Residues Lys-1055 and Lys-1070 each participate in a glycyl lysine isopeptide (Lys-Gly) (interchain with G-Cter in SUMO2) cross-link. Ser-1133 bears the Phosphoserine mark.

This sequence belongs to the ARID5B family. Post-translationally, methylation at Lys-336 prevents DNA-binding. Demethylation by PHF2 promotes recruitment of the PHF2-ARID5B complex to promoters. Widely expressed, including in liver (at protein level).

The protein resides in the nucleus. Its function is as follows. Transcription coactivator that binds to the 5'-AATA[CT]-3' core sequence and plays a key role in adipogenesis and liver development. Acts by forming a complex with phosphorylated PHF2, which mediates demethylation at Lys-336, leading to target the PHF2-ARID5B complex to target promoters, where PHF2 mediates demethylation of dimethylated 'Lys-9' of histone H3 (H3K9me2), followed by transcription activation of target genes. The PHF2-ARID5B complex acts as a coactivator of HNF4A in liver. Required for adipogenesis: regulates triglyceride metabolism in adipocytes by regulating expression of adipogenic genes. Overexpression leads to induction of smooth muscle marker genes, suggesting that it may also act as a regulator of smooth muscle cell differentiation and proliferation. Represses the cytomegalovirus enhancer. This chain is AT-rich interactive domain-containing protein 5B (ARID5B), found in Homo sapiens (Human).